Reading from the N-terminus, the 274-residue chain is 4-hydroxy-3-methylbut-2-enyl diphosphate reductase (274 aa).

[4Fe-4S] cluster is bound at residue Cys12. 2 residues coordinate (2E)-4-hydroxy-3-methylbut-2-enyl diphosphate: His36 and His70. Dimethylallyl diphosphate is bound by residues His36 and His70. Positions 36 and 70 each coordinate isopentenyl diphosphate. Cys92 contacts [4Fe-4S] cluster. His120 is a (2E)-4-hydroxy-3-methylbut-2-enyl diphosphate binding site. His120 contributes to the dimethylallyl diphosphate binding site. His120 contacts isopentenyl diphosphate. Catalysis depends on Glu122, which acts as the Proton donor. Residue Thr158 coordinates (2E)-4-hydroxy-3-methylbut-2-enyl diphosphate. Cys186 contacts [4Fe-4S] cluster. Ser214, Ser215, Asn216, and Ser258 together coordinate (2E)-4-hydroxy-3-methylbut-2-enyl diphosphate. The dimethylallyl diphosphate site is built by Ser214, Ser215, Asn216, and Ser258. Residues Ser214, Ser215, Asn216, and Ser258 each contribute to the isopentenyl diphosphate site.

Belongs to the IspH family. The cofactor is [4Fe-4S] cluster.

It carries out the reaction isopentenyl diphosphate + 2 oxidized [2Fe-2S]-[ferredoxin] + H2O = (2E)-4-hydroxy-3-methylbut-2-enyl diphosphate + 2 reduced [2Fe-2S]-[ferredoxin] + 2 H(+). The enzyme catalyses dimethylallyl diphosphate + 2 oxidized [2Fe-2S]-[ferredoxin] + H2O = (2E)-4-hydroxy-3-methylbut-2-enyl diphosphate + 2 reduced [2Fe-2S]-[ferredoxin] + 2 H(+). The protein operates within isoprenoid biosynthesis; dimethylallyl diphosphate biosynthesis; dimethylallyl diphosphate from (2E)-4-hydroxy-3-methylbutenyl diphosphate: step 1/1. It functions in the pathway isoprenoid biosynthesis; isopentenyl diphosphate biosynthesis via DXP pathway; isopentenyl diphosphate from 1-deoxy-D-xylulose 5-phosphate: step 6/6. Catalyzes the conversion of 1-hydroxy-2-methyl-2-(E)-butenyl 4-diphosphate (HMBPP) into a mixture of isopentenyl diphosphate (IPP) and dimethylallyl diphosphate (DMAPP). Acts in the terminal step of the DOXP/MEP pathway for isoprenoid precursor biosynthesis. The polypeptide is 4-hydroxy-3-methylbut-2-enyl diphosphate reductase (Campylobacter concisus (strain 13826)).